The sequence spans 126 residues: Large ribosomal subunit protein bL12 (126 aa).

It belongs to the bacterial ribosomal protein bL12 family. In terms of assembly, homodimer. Part of the ribosomal stalk of the 50S ribosomal subunit. Forms a multimeric L10(L12)X complex, where L10 forms an elongated spine to which 2 to 4 L12 dimers bind in a sequential fashion. Binds GTP-bound translation factors.

In terms of biological role, forms part of the ribosomal stalk which helps the ribosome interact with GTP-bound translation factors. Is thus essential for accurate translation. The protein is Large ribosomal subunit protein bL12 of Elusimicrobium minutum (strain Pei191).